Reading from the N-terminus, the 190-residue chain is Fe/S biogenesis protein NfuA (190 aa).

[4Fe-4S] cluster is bound by residues Cys148 and Cys151.

This sequence belongs to the NfuA family. Homodimer. [4Fe-4S] cluster serves as cofactor.

In terms of biological role, involved in iron-sulfur cluster biogenesis. Binds a 4Fe-4S cluster, can transfer this cluster to apoproteins, and thereby intervenes in the maturation of Fe/S proteins. Could also act as a scaffold/chaperone for damaged Fe/S proteins. In Baumannia cicadellinicola subsp. Homalodisca coagulata, this protein is Fe/S biogenesis protein NfuA.